We begin with the raw amino-acid sequence, 307 residues long: Alpha N-terminal protein methyltransferase 1 (307 aa).

A compositionally biased stretch (low complexity) spans 38-51; sequence EPAPAPAAGSNGVA. Positions 38–60 are disordered; that stretch reads EPAPAPAAGSNGVAGEEEAGGGG. Residues Gly-123, Arg-128, 145 to 147, 179 to 180, and Gln-195 each bind S-adenosyl-L-methionine; these read EPV and LQ.

The protein belongs to the methyltransferase superfamily. NTM1 family.

The catalysed reaction is N-terminal L-alanyl-L-prolyl-L-lysyl-[protein] + 3 S-adenosyl-L-methionine = N-terminal N,N,N-trimethyl-L-alanyl-L-prolyl-L-lysyl-[protein] + 3 S-adenosyl-L-homocysteine + 3 H(+). It carries out the reaction N-terminal L-seryl-L-prolyl-L-lysyl-[protein] + 3 S-adenosyl-L-methionine = N-terminal N,N,N-trimethyl-L-seryl-L-prolyl-L-lysyl-[protein] + 3 S-adenosyl-L-homocysteine + 3 H(+). It catalyses the reaction N-terminal L-prolyl-L-prolyl-L-lysyl-[protein] + 2 S-adenosyl-L-methionine = N-terminal N,N-dimethyl-L-prolyl-L-prolyl-L-lysyl-[protein] + 2 S-adenosyl-L-homocysteine + 2 H(+). Functionally, alpha-N-methyltransferase that methylates the N-terminus of target proteins containing the N-terminal motif [Ala/Pro/Ser]-Pro-Lys when the initiator Met is cleaved. Specifically catalyzes mono-, di- or tri-methylation of exposed alpha-amino group of Ala or Ser residue in the [Ala/Ser]-Pro-Lys motif and mono- or di-methylation of Pro in the Pro-Pro-Lys motif. The sequence is that of Alpha N-terminal protein methyltransferase 1 from Oryza sativa subsp. japonica (Rice).